A 116-amino-acid chain; its full sequence is Ribosome-binding factor A (116 aa).

Belongs to the RbfA family. In terms of assembly, monomer. Binds 30S ribosomal subunits, but not 50S ribosomal subunits or 70S ribosomes.

It localises to the cytoplasm. In terms of biological role, one of several proteins that assist in the late maturation steps of the functional core of the 30S ribosomal subunit. Associates with free 30S ribosomal subunits (but not with 30S subunits that are part of 70S ribosomes or polysomes). Required for efficient processing of 16S rRNA. May interact with the 5'-terminal helix region of 16S rRNA. The chain is Ribosome-binding factor A from Streptococcus pyogenes serotype M5 (strain Manfredo).